The following is a 118-amino-acid chain: Large ribosomal subunit protein bL19 (118 aa).

This sequence belongs to the bacterial ribosomal protein bL19 family.

Its function is as follows. This protein is located at the 30S-50S ribosomal subunit interface and may play a role in the structure and function of the aminoacyl-tRNA binding site. This chain is Large ribosomal subunit protein bL19, found in Campylobacter lari (strain RM2100 / D67 / ATCC BAA-1060).